A 261-amino-acid polypeptide reads, in one-letter code: uncharacterized protein (261 aa).

This is an uncharacterized protein from Bacillus subtilis (strain 168).